A 295-amino-acid chain; its full sequence is Autophagy-related protein 37 (295 aa).

The ACB domain maps to 5–103 (VDRVFVHALN…LIDTMHRYAT (99 aa)). Disordered stretches follow at residues 124-162 (NSPS…PLKE) and 174-201 (LRSQ…RWQR). Residues 125 to 153 (SPSSSLSSPRPNQSTGAGAQQPQQEPEQA) show a composition bias toward low complexity. The N-linked (GlcNAc...) asparagine glycan is linked to Asn136. Residues 244–264 (WLLVKHIFADLVILSVVLLWL) form a helical membrane-spanning segment.

Belongs to the ATG37 family.

The protein resides in the peroxisome membrane. Acyl-CoA binding protein which acts as the peroxisome receptor for pexophagy. Required for both micropexophagy and macropexophagy, but not for the cytoplasm to vacuole transport (Cvt) or autophagy pathways. Required for functional micropexophagic apparatus (MIPA) and relocation of ATG11 to the peroxisome-sequestering arms of the vacuole. Binds palmitoyl-CoA but not oleyl-CoA. The protein is Autophagy-related protein 37 of Gibberella zeae (strain ATCC MYA-4620 / CBS 123657 / FGSC 9075 / NRRL 31084 / PH-1) (Wheat head blight fungus).